We begin with the raw amino-acid sequence, 379 residues long: Succinyl-diaminopimelate desuccinylase (379 aa).

H70 is a Zn(2+) binding site. Residue D72 is part of the active site. A Zn(2+)-binding site is contributed by D103. E137 (proton acceptor) is an active-site residue. 3 residues coordinate Zn(2+): E138, E166, and H352.

Belongs to the peptidase M20A family. DapE subfamily. Homodimer. Zn(2+) is required as a cofactor. Co(2+) serves as cofactor.

The enzyme catalyses N-succinyl-(2S,6S)-2,6-diaminopimelate + H2O = (2S,6S)-2,6-diaminopimelate + succinate. It functions in the pathway amino-acid biosynthesis; L-lysine biosynthesis via DAP pathway; LL-2,6-diaminopimelate from (S)-tetrahydrodipicolinate (succinylase route): step 3/3. In terms of biological role, catalyzes the hydrolysis of N-succinyl-L,L-diaminopimelic acid (SDAP), forming succinate and LL-2,6-diaminopimelate (DAP), an intermediate involved in the bacterial biosynthesis of lysine and meso-diaminopimelic acid, an essential component of bacterial cell walls. This chain is Succinyl-diaminopimelate desuccinylase, found in Burkholderia orbicola (strain MC0-3).